A 509-amino-acid polypeptide reads, in one-letter code: tRNA-2-methylthio-N(6)-dimethylallyladenosine synthase (509 aa).

The disordered stretch occupies residues 1 to 20 (MNEKQKQESGQVNPADKTSE). Residues 66 to 184 (RKFYIRTYGC…LPELLSEAYL (119 aa)) enclose the MTTase N-terminal domain. Residues C75, C111, C145, C221, C225, and C228 each coordinate [4Fe-4S] cluster. The Radical SAM core domain occupies 207 to 437 (RNGKIKGWVN…NDLVKEISAK (231 aa)). The 64-residue stretch at 440–503 (KEYEGRTVEV…TWSLDGVMAG (64 aa)) folds into the TRAM domain.

It belongs to the methylthiotransferase family. MiaB subfamily. In terms of assembly, monomer. It depends on [4Fe-4S] cluster as a cofactor.

It localises to the cytoplasm. It catalyses the reaction N(6)-dimethylallyladenosine(37) in tRNA + (sulfur carrier)-SH + AH2 + 2 S-adenosyl-L-methionine = 2-methylsulfanyl-N(6)-dimethylallyladenosine(37) in tRNA + (sulfur carrier)-H + 5'-deoxyadenosine + L-methionine + A + S-adenosyl-L-homocysteine + 2 H(+). Its function is as follows. Catalyzes the methylthiolation of N6-(dimethylallyl)adenosine (i(6)A), leading to the formation of 2-methylthio-N6-(dimethylallyl)adenosine (ms(2)i(6)A) at position 37 in tRNAs that read codons beginning with uridine. The sequence is that of tRNA-2-methylthio-N(6)-dimethylallyladenosine synthase from Bacillus velezensis (strain DSM 23117 / BGSC 10A6 / LMG 26770 / FZB42) (Bacillus amyloliquefaciens subsp. plantarum).